A 182-amino-acid polypeptide reads, in one-letter code: MYHGQKLAKLGRESHHRMLMLRTMVTQLIRHERIKTTLAKAKALRKEADRIITIAKRNTRLSHSLVYSYVTDKQVIPKLFKELRLRFGDRPGGYTRVLKAGSRLSDRSKMAYIEYVENDLVPLRDYKANNSKFAVIRKPTPQGTVFNFEEKETGKIYSSAISLNNRFKRLEQLKKQSTSSSN.

It belongs to the bacterial ribosomal protein bL17 family.

Its subcellular location is the mitochondrion. The chain is Large ribosomal subunit protein bL17m (mrpl17) from Dictyostelium discoideum (Social amoeba).